The primary structure comprises 732 residues: Polyribonucleotide nucleotidyltransferase (732 aa).

2 residues coordinate Mg(2+): Asp503 and Asp509. The region spanning 570–629 (PRLTSIQIPVDAIGLIIGKGGETIRSITEETGAEINIEDDGTVTIACSSPEGTNAAVETI) is the KH domain. One can recognise an S1 motif domain in the interval 639-713 (GNTYLGKVRD…GKNRFALSIK (75 aa)). Positions 710–732 (LSIKAVESEPEKSDENKAGTEGN) are disordered. A compositionally biased stretch (basic and acidic residues) spans 715–732 (VESEPEKSDENKAGTEGN).

This sequence belongs to the polyribonucleotide nucleotidyltransferase family. Mg(2+) is required as a cofactor.

The protein resides in the cytoplasm. The enzyme catalyses RNA(n+1) + phosphate = RNA(n) + a ribonucleoside 5'-diphosphate. Its function is as follows. Involved in mRNA degradation. Catalyzes the phosphorolysis of single-stranded polyribonucleotides processively in the 3'- to 5'-direction. The chain is Polyribonucleotide nucleotidyltransferase from Chlorobium phaeobacteroides (strain DSM 266 / SMG 266 / 2430).